The chain runs to 325 residues: Secreted RxLR effector protein RXLR-C07 (325 aa).

The signal sequence occupies residues 1–19 (MQGVRITILWCIVLATIYA). TPR repeat units lie at residues 37–75 (RGLRNAGMKANDERMFKDAIEKLRHAISLLHNRVFGEER), 92–125 (AQILNDYGSVLIRTKQYDEAIEVLEDSVAMIEKI), 134–167 (GLSLRSLADAYMEKKAFKSAIKRYKTLRKHVKKG), 218–251 (AELYMELSSAHVEVGEIDDALRAAETASAIFLQR), and 260–293 (AFSLNALAGVKMQQKKVDEAIDLLDRAHNIAVSI). Residues 37-75 (RGLRNAGMKANDERMFKDAIEKLRHAISLLHNRVFGEER) carry the RxLR-dEER motif.

This sequence belongs to the RxLR effector family.

The protein localises to the secreted. It is found in the host cytoplasm. The protein resides in the host nucleus. Its subcellular location is the host nucleolus. Secreted effector that suppresses pattern-triggered immunity (PTI) in plant host. This Plasmopara halstedii (Downy mildew of sunflower) protein is Secreted RxLR effector protein RXLR-C07.